Consider the following 1611-residue polypeptide: Pentafunctional AROM polypeptide (1611 aa).

Residues 1 to 406 are 3-dehydroquinate synthase; sequence MSQVSGGKVP…VEERASTVSD (406 aa). NAD(+) contacts are provided by residues 64–66, 97–100, 128–130, and Asp-133; these read DTN, EESK, and GGV. Arg-144 is a binding site for 7-phospho-2-dehydro-3-deoxy-D-arabino-heptonate. 153–154 is a binding site for NAD(+); that stretch reads TT. 7-phospho-2-dehydro-3-deoxy-D-arabino-heptonate is bound by residues Asp-160 and Lys-166. Lys-175 is a binding site for NAD(+). Position 176 (Asn-176) interacts with 7-phospho-2-dehydro-3-deoxy-D-arabino-heptonate. NAD(+) is bound by residues 193-196 and Asn-204; that span reads WLLT. Glu-208 provides a ligand contact to Zn(2+). 7-phospho-2-dehydro-3-deoxy-D-arabino-heptonate-binding positions include 208–211 and Lys-272; that span reads EVIK. Glu-282 (proton acceptor; for 3-dehydroquinate synthase activity) is an active-site residue. Residues 286–290 and His-293 contribute to the 7-phospho-2-dehydro-3-deoxy-D-arabino-heptonate site; that span reads RNLVN. Zn(2+) is bound at residue His-293. The active-site Proton acceptor; for 3-dehydroquinate synthase activity is the His-297. 2 residues coordinate 7-phospho-2-dehydro-3-deoxy-D-arabino-heptonate: His-309 and Lys-378. His-309 contributes to the Zn(2+) binding site. Residues 419-882 are EPSP synthase; it reads VRESVSAPRP…WDVLGGPLNV (464 aa). Catalysis depends on Cys-864, which acts as the For EPSP synthase activity. Positions 915 to 1092 are shikimate kinase; sequence DASIVLIGMR…VPISPAFFLS (178 aa). ATP is bound at residue 922–929; sequence GMRASGKS. The 3-dehydroquinase stretch occupies residues 1093-1309; that stretch reads LTFPRVQDAW…AAPGQMSVRD (217 aa). His-1212 functions as the Proton acceptor; for 3-dehydroquinate dehydratase activity in the catalytic mechanism. Residue Lys-1240 is the Schiff-base intermediate with substrate; for 3-dehydroquinate dehydratase activity of the active site. The shikimate dehydrogenase stretch occupies residues 1322-1611; sequence KRHFFLFGSP…AAYRAAAASM (290 aa).

The protein in the N-terminal section; belongs to the sugar phosphate cyclases superfamily. Dehydroquinate synthase family. In the 2nd section; belongs to the EPSP synthase family. This sequence in the 3rd section; belongs to the shikimate kinase family. It in the 4th section; belongs to the type-I 3-dehydroquinase family. The protein in the C-terminal section; belongs to the shikimate dehydrogenase family. Homodimer. Zn(2+) is required as a cofactor.

It localises to the cytoplasm. The catalysed reaction is 7-phospho-2-dehydro-3-deoxy-D-arabino-heptonate = 3-dehydroquinate + phosphate. The enzyme catalyses 3-dehydroquinate = 3-dehydroshikimate + H2O. It carries out the reaction shikimate + NADP(+) = 3-dehydroshikimate + NADPH + H(+). It catalyses the reaction shikimate + ATP = 3-phosphoshikimate + ADP + H(+). The catalysed reaction is 3-phosphoshikimate + phosphoenolpyruvate = 5-O-(1-carboxyvinyl)-3-phosphoshikimate + phosphate. Its pathway is metabolic intermediate biosynthesis; chorismate biosynthesis; chorismate from D-erythrose 4-phosphate and phosphoenolpyruvate: step 2/7. It participates in metabolic intermediate biosynthesis; chorismate biosynthesis; chorismate from D-erythrose 4-phosphate and phosphoenolpyruvate: step 3/7. The protein operates within metabolic intermediate biosynthesis; chorismate biosynthesis; chorismate from D-erythrose 4-phosphate and phosphoenolpyruvate: step 4/7. It functions in the pathway metabolic intermediate biosynthesis; chorismate biosynthesis; chorismate from D-erythrose 4-phosphate and phosphoenolpyruvate: step 5/7. Its pathway is metabolic intermediate biosynthesis; chorismate biosynthesis; chorismate from D-erythrose 4-phosphate and phosphoenolpyruvate: step 6/7. In terms of biological role, the AROM polypeptide catalyzes 5 consecutive enzymatic reactions in prechorismate polyaromatic amino acid biosynthesis. This chain is Pentafunctional AROM polypeptide, found in Malassezia globosa (strain ATCC MYA-4612 / CBS 7966) (Dandruff-associated fungus).